The sequence spans 220 residues: Large ribosomal subunit protein uL1 (220 aa).

Belongs to the universal ribosomal protein uL1 family. In terms of assembly, part of the 50S ribosomal subunit.

Functionally, binds directly to 23S rRNA. The L1 stalk is quite mobile in the ribosome, and is involved in E site tRNA release. Its function is as follows. Protein L1 is also a translational repressor protein, it controls the translation of the L11 operon by binding to its mRNA. This is Large ribosomal subunit protein uL1 from Ehrlichia chaffeensis (strain ATCC CRL-10679 / Arkansas).